A 308-amino-acid chain; its full sequence is Ribosomal RNA large subunit methyltransferase F (308 aa).

The protein belongs to the methyltransferase superfamily. METTL16/RlmF family.

It localises to the cytoplasm. It catalyses the reaction adenosine(1618) in 23S rRNA + S-adenosyl-L-methionine = N(6)-methyladenosine(1618) in 23S rRNA + S-adenosyl-L-homocysteine + H(+). Specifically methylates the adenine in position 1618 of 23S rRNA. The protein is Ribosomal RNA large subunit methyltransferase F of Salmonella dublin (strain CT_02021853).